The sequence spans 275 residues: Lectin (275 aa).

Positions 1 to 30 are cleaved as a signal peptide; sequence MASLQTQMISFYLIFLSILLTTIFFFKVNS. Asp111 and Gly129 together coordinate D-glucose. Residues Glu149 and Asp151 each coordinate Mn(2+). Residues Asp151, Phe153, Asn155, and Asp159 each coordinate Ca(2+). Mn(2+)-binding residues include Asp159 and His166. Residues 211-217 constitute a propeptide that is removed on maturation; it reads NSLEEEN. D-glucose is bound by residues Gly246 and Ala247. Residues 270 to 275 constitute a propeptide that is removed on maturation; that stretch reads KQAADA.

It belongs to the leguminous lectin family. In terms of assembly, heterotetramer of two alpha and two beta chains. The mature form consists of two chains, alpha and beta, produced by cleavage of the immature protein. These remain cleaved, yet fold together to form one subunit.

Functionally, D-mannose specific lectin. The sequence is that of Lectin from Lens culinaris subsp. culinaris (Cultivated lentil).